The chain runs to 119 residues: Phosphoribosyl-AMP cyclohydrolase (119 aa).

D71 is a binding site for Mg(2+). Residue C72 participates in Zn(2+) binding. Residues D73 and D75 each coordinate Mg(2+). Zn(2+)-binding residues include C90 and C97.

Belongs to the PRA-CH family. Homodimer. It depends on Mg(2+) as a cofactor. Requires Zn(2+) as cofactor.

It is found in the cytoplasm. The catalysed reaction is 1-(5-phospho-beta-D-ribosyl)-5'-AMP + H2O = 1-(5-phospho-beta-D-ribosyl)-5-[(5-phospho-beta-D-ribosylamino)methylideneamino]imidazole-4-carboxamide. It functions in the pathway amino-acid biosynthesis; L-histidine biosynthesis; L-histidine from 5-phospho-alpha-D-ribose 1-diphosphate: step 3/9. Its function is as follows. Catalyzes the hydrolysis of the adenine ring of phosphoribosyl-AMP. The sequence is that of Phosphoribosyl-AMP cyclohydrolase from Brucella abortus (strain 2308).